Consider the following 389-residue polypeptide: S-adenosylmethionine synthase (389 aa).

Histidine 16 contributes to the ATP binding site. Aspartate 18 is a binding site for Mg(2+). Glutamate 44 serves as a coordination point for K(+). The L-methionine site is built by glutamate 57 and glutamine 100. Residues 100–110 are flexible loop; sequence QSPDIAQGVDE. Residues 167-169, 233-234, aspartate 242, 248-249, alanine 265, and lysine 269 contribute to the ATP site; these read DAK, RF, and RK. Aspartate 242 is a binding site for L-methionine. An L-methionine-binding site is contributed by lysine 273.

Belongs to the AdoMet synthase family. As to quaternary structure, homotetramer; dimer of dimers. Mg(2+) serves as cofactor. The cofactor is K(+).

The protein localises to the cytoplasm. It catalyses the reaction L-methionine + ATP + H2O = S-adenosyl-L-methionine + phosphate + diphosphate. Its pathway is amino-acid biosynthesis; S-adenosyl-L-methionine biosynthesis; S-adenosyl-L-methionine from L-methionine: step 1/1. Its function is as follows. Catalyzes the formation of S-adenosylmethionine (AdoMet) from methionine and ATP. The overall synthetic reaction is composed of two sequential steps, AdoMet formation and the subsequent tripolyphosphate hydrolysis which occurs prior to release of AdoMet from the enzyme. The sequence is that of S-adenosylmethionine synthase from Acidithiobacillus ferrooxidans (strain ATCC 23270 / DSM 14882 / CIP 104768 / NCIMB 8455) (Ferrobacillus ferrooxidans (strain ATCC 23270)).